Reading from the N-terminus, the 109-residue chain is Small ribosomal subunit protein eS25 (109 aa).

Basic and acidic residues predominate over residues 1–13 (MVKKIQESKEKKA). The interval 1 to 34 (MVKKIQESKEKKALKAASGTRKDKKKWGDGRKKE) is disordered.

The protein belongs to the eukaryotic ribosomal protein eS25 family.

This Encephalitozoon cuniculi (strain GB-M1) (Microsporidian parasite) protein is Small ribosomal subunit protein eS25 (RPS25-1).